Here is a 348-residue protein sequence, read N- to C-terminus: Ketol-acid reductoisomerase (NADP(+)) (348 aa).

In terms of domain architecture, KARI N-terminal Rossmann spans 1 to 179 (MDVHYDADPA…GGTHAGVIET (179 aa)). NADP(+) contacts are provided by residues 22–25 (YGSQ), Arg-45, Ser-48, Ser-50, and 80–83 (DQHQ). The active site involves His-105. Position 131 (Gly-131) interacts with NADP(+). Residues 180–325 (TFKDETETDL…QTLRGMMPWL (146 aa)) form the KARI C-terminal knotted domain. Positions 188, 192, 224, and 228 each coordinate Mg(2+). Ser-249 serves as a coordination point for substrate. Positions 323–348 (PWLNGDETSADEDAPDAADTAPASSS) are disordered. Over residues 339 to 348 (AADTAPASSS) the composition is skewed to low complexity.

It belongs to the ketol-acid reductoisomerase family. Requires Mg(2+) as cofactor.

It catalyses the reaction (2R)-2,3-dihydroxy-3-methylbutanoate + NADP(+) = (2S)-2-acetolactate + NADPH + H(+). The enzyme catalyses (2R,3R)-2,3-dihydroxy-3-methylpentanoate + NADP(+) = (S)-2-ethyl-2-hydroxy-3-oxobutanoate + NADPH + H(+). It functions in the pathway amino-acid biosynthesis; L-isoleucine biosynthesis; L-isoleucine from 2-oxobutanoate: step 2/4. Its pathway is amino-acid biosynthesis; L-valine biosynthesis; L-valine from pyruvate: step 2/4. Involved in the biosynthesis of branched-chain amino acids (BCAA). Catalyzes an alkyl-migration followed by a ketol-acid reduction of (S)-2-acetolactate (S2AL) to yield (R)-2,3-dihydroxy-isovalerate. In the isomerase reaction, S2AL is rearranged via a Mg-dependent methyl migration to produce 3-hydroxy-3-methyl-2-ketobutyrate (HMKB). In the reductase reaction, this 2-ketoacid undergoes a metal-dependent reduction by NADPH to yield (R)-2,3-dihydroxy-isovalerate. The polypeptide is Ketol-acid reductoisomerase (NADP(+)) (Salinibacter ruber (strain DSM 13855 / M31)).